The chain runs to 589 residues: Threonine--tRNA ligase (589 aa).

A catalytic region spans residues 191-487 (DHRKIGKNLG…LLEQTKGNFP (297 aa)). Residues cysteine 284, histidine 335, and histidine 464 each contribute to the Zn(2+) site.

It belongs to the class-II aminoacyl-tRNA synthetase family. As to quaternary structure, homodimer. The cofactor is Zn(2+).

The protein resides in the cytoplasm. It carries out the reaction tRNA(Thr) + L-threonine + ATP = L-threonyl-tRNA(Thr) + AMP + diphosphate + H(+). Its function is as follows. Catalyzes the attachment of threonine to tRNA(Thr) in a two-step reaction: L-threonine is first activated by ATP to form Thr-AMP and then transferred to the acceptor end of tRNA(Thr). Also edits incorrectly charged L-seryl-tRNA(Thr). This is Threonine--tRNA ligase from Mycoplasmopsis pulmonis (strain UAB CTIP) (Mycoplasma pulmonis).